Here is a 288-residue protein sequence, read N- to C-terminus: Glycine--tRNA ligase alpha subunit (288 aa).

This sequence belongs to the class-II aminoacyl-tRNA synthetase family. Tetramer of two alpha and two beta subunits.

The protein resides in the cytoplasm. The enzyme catalyses tRNA(Gly) + glycine + ATP = glycyl-tRNA(Gly) + AMP + diphosphate. This is Glycine--tRNA ligase alpha subunit from Rickettsia rickettsii (strain Iowa).